Consider the following 2492-residue polypeptide: Polyketide synthase 19 (2492 aa).

Positions R12–S463 constitute a Ketosynthase family 3 (KS3) domain. Residues C202, H341, and H383 each act as for beta-ketoacyl synthase activity in the active site. Residues V571 to K866 form a malonyl-CoA:ACP transacylase (MAT) domain region. An N-terminal hotdog fold region spans residues H967–P1110. A dehydratase (DH) domain region spans residues H967–P1270. Positions H967–R1273 constitute a PKS/mFAS DH domain. H1001 (proton acceptor; for dehydratase activity) is an active-site residue. Positions M1125–R1273 are C-terminal hotdog fold. The Proton donor; for dehydratase activity role is filled by D1183. Residues L1431–I1604 are C-methyltransferase (CMeT) domain. Residues S2118–L2293 form a ketoreductase (KR) domain region. Positions P2404–W2479 constitute a Carrier domain. S2438 is modified (O-(pantetheine 4'-phosphoryl)serine).

Highly reducing polyketide synthase; part of the gene cluster that mediates the biosynthesis of fujikurins A-D, secondary metabolites playing a role during rice infection. The polyketide synthase PKS19 acts with the trans-enoyl reductase FFUJ_12240 and the polyketide transferase FFUJ_12241 to produce fujikurins, however, the biosynthesis pathway has not been identified yet. The sequence is that of Polyketide synthase 19 from Gibberella fujikuroi (strain CBS 195.34 / IMI 58289 / NRRL A-6831) (Bakanae and foot rot disease fungus).